Here is a 471-residue protein sequence, read N- to C-terminus: Alpha-galactosidase (471 aa).

Positions 1 to 18 (MFLLYLFTSFAAVSGVLG) are cleaved as a signal peptide. C42 and C74 are joined by a disulfide. Substrate is bound by residues D72 and D73. N-linked (GlcNAc...) asparagine glycosylation occurs at N82. Residues C121 and C151 are joined by a disulfide bond. K147 provides a ligand contact to substrate. D149 (nucleophile) is an active-site residue. An N-linked (GlcNAc...) asparagine glycan is attached at N175. A substrate-binding site is contributed by R205. The active-site Proton donor is D209. Disulfide bonds link C221–C237 and C223–C230. Q251 is a substrate binding site. N270, N403, N412, N417, N422, N435, and N454 each carry an N-linked (GlcNAc...) asparagine glycan.

It belongs to the glycosyl hydrolase 27 family. As to quaternary structure, homotetramer.

Its subcellular location is the secreted. It carries out the reaction Hydrolysis of terminal, non-reducing alpha-D-galactose residues in alpha-D-galactosides, including galactose oligosaccharides, galactomannans and galactolipids.. In Saccharomyces pastorianus (strain ATCC 76529 / Carlsberg bottom yeast no.1 / CBS 1513 / CLIB 176 / NBRC 1167 / NCYC 396 / NRRL Y-12693) (Saaz-type lager yeast), this protein is Alpha-galactosidase (MEL).